The primary structure comprises 249 residues: Type III pantothenate kinase (249 aa).

ATP is bound at residue 6–13 (DCGNSFIK). Substrate-binding positions include Tyr93 and 100-103 (GLDR). Asp102 (proton acceptor) is an active-site residue. Asp122 provides a ligand contact to K(+). ATP is bound at residue Thr125. Thr181 serves as a coordination point for substrate.

This sequence belongs to the type III pantothenate kinase family. As to quaternary structure, homodimer. NH4(+) is required as a cofactor. The cofactor is K(+).

The protein resides in the cytoplasm. The enzyme catalyses (R)-pantothenate + ATP = (R)-4'-phosphopantothenate + ADP + H(+). Its pathway is cofactor biosynthesis; coenzyme A biosynthesis; CoA from (R)-pantothenate: step 1/5. Catalyzes the phosphorylation of pantothenate (Pan), the first step in CoA biosynthesis. In Pseudomonas fluorescens (strain Pf0-1), this protein is Type III pantothenate kinase.